We begin with the raw amino-acid sequence, 183 residues long: Large ribosomal subunit protein uL10 (183 aa).

This sequence belongs to the universal ribosomal protein uL10 family. As to quaternary structure, part of the ribosomal stalk of the 50S ribosomal subunit. The N-terminus interacts with L11 and the large rRNA to form the base of the stalk. The C-terminus forms an elongated spine to which L12 dimers bind in a sequential fashion forming a multimeric L10(L12)X complex.

Its function is as follows. Forms part of the ribosomal stalk, playing a central role in the interaction of the ribosome with GTP-bound translation factors. This is Large ribosomal subunit protein uL10 from Mesomycoplasma hyopneumoniae (strain 7448) (Mycoplasma hyopneumoniae).